The chain runs to 362 residues: 3-dehydroquinate synthase (362 aa).

Residues 71–76 (DGERYK), 105–109 (GVIGD), 129–130 (TT), Lys142, Lys151, and 169–172 (CLKT) contribute to the NAD(+) site. Positions 184, 247, and 264 each coordinate Zn(2+).

The protein belongs to the sugar phosphate cyclases superfamily. Dehydroquinate synthase family. Requires Co(2+) as cofactor. The cofactor is Zn(2+). It depends on NAD(+) as a cofactor.

It is found in the cytoplasm. It catalyses the reaction 7-phospho-2-dehydro-3-deoxy-D-arabino-heptonate = 3-dehydroquinate + phosphate. It participates in metabolic intermediate biosynthesis; chorismate biosynthesis; chorismate from D-erythrose 4-phosphate and phosphoenolpyruvate: step 2/7. Its function is as follows. Catalyzes the conversion of 3-deoxy-D-arabino-heptulosonate 7-phosphate (DAHP) to dehydroquinate (DHQ). The chain is 3-dehydroquinate synthase from Salmonella arizonae (strain ATCC BAA-731 / CDC346-86 / RSK2980).